The following is a 593-amino-acid chain: MAESLNGLKRTVMCGELRESHIGQKHVVMGWVQRKRNLGGLVFVDLRDREGILQVVFGEEINKEAFEKADLVKPEYCIAVEGELVRRESPNEAMPTGMVELKGQNIKILSESETPPIYIKEDLDTDEAVRLKYRYLDLRRPDMQKIFKVRHKTAKVIRDFLDENGFLEMETPMLTKSTPEGARDYLVPSRNYPGMFYALPQSPQLFKQLLMVSGYDKYFQITKCFRDEDLRANRQPEFTQVDMELSFVDMEDVIALNEKLIQKVFKEVANVDVQLPIQRITYKEAMDKYGSDKPDLRFGMEINDITDAVKDVDFKVFKDAIENGGSVRAIKAPNCATMGRKQIDKLGEFVKTYKAKGLAWIAYKEDEIKSPIAKFLGEEGINKVIESLDAKVGDLILIVADKDSVVLQSLGALRLEMAKRLEILKDNKEFRFAWVTEFPLLSYNEEEDRYQAEHHPFTMPMDEDIEYLESDPGRVRAKAYDIVLNGEELGGGSIRIHDTKLQEKMFNVLGFTSESAWERFGFLLEAFKFGPPPHGGLAYGFDRMIMFLAGTENIKDVIAFPKNQNAYCPLTEAPNVVDEKQLGELGIGVQKQK.

E180 lines the L-aspartate pocket. An aspartate region spans residues 204-207 (QLFK). R226 contacts L-aspartate. ATP is bound by residues 226 to 228 (RDE) and Q235. An L-aspartate-binding site is contributed by H454. An ATP-binding site is contributed by E488. R495 is an L-aspartate binding site. ATP is bound at residue 540 to 543 (GFDR).

Belongs to the class-II aminoacyl-tRNA synthetase family. Type 1 subfamily. As to quaternary structure, homodimer.

The protein resides in the cytoplasm. The enzyme catalyses tRNA(Asp) + L-aspartate + ATP = L-aspartyl-tRNA(Asp) + AMP + diphosphate. Its function is as follows. Catalyzes the attachment of L-aspartate to tRNA(Asp) in a two-step reaction: L-aspartate is first activated by ATP to form Asp-AMP and then transferred to the acceptor end of tRNA(Asp). In Clostridium novyi (strain NT), this protein is Aspartate--tRNA ligase.